The following is a 56-amino-acid chain: UPF0391 membrane protein PSHAa0537 (56 aa).

2 helical membrane passes run 6 to 26 and 27 to 47; these read ITFLVIALIAAVLGFGGIAGA and AAGIAKIIFFIFLILLVISLV.

This sequence belongs to the UPF0391 family.

It is found in the cell membrane. The polypeptide is UPF0391 membrane protein PSHAa0537 (Pseudoalteromonas translucida (strain TAC 125)).